A 441-amino-acid chain; its full sequence is Glutamyl-tRNA reductase (441 aa).

Substrate-binding positions include 47 to 50, S110, 115 to 117, and Q121; these read TCNR and ERE. The Nucleophile role is filled by C48. An NADP(+)-binding site is contributed by 192 to 197; the sequence is GTGAYA.

Belongs to the glutamyl-tRNA reductase family. As to quaternary structure, homodimer.

It catalyses the reaction (S)-4-amino-5-oxopentanoate + tRNA(Glu) + NADP(+) = L-glutamyl-tRNA(Glu) + NADPH + H(+). Its pathway is porphyrin-containing compound metabolism; protoporphyrin-IX biosynthesis; 5-aminolevulinate from L-glutamyl-tRNA(Glu): step 1/2. Its function is as follows. Catalyzes the NADPH-dependent reduction of glutamyl-tRNA(Glu) to glutamate 1-semialdehyde (GSA). This Pseudarthrobacter chlorophenolicus (strain ATCC 700700 / DSM 12829 / CIP 107037 / JCM 12360 / KCTC 9906 / NCIMB 13794 / A6) (Arthrobacter chlorophenolicus) protein is Glutamyl-tRNA reductase.